Consider the following 89-residue polypeptide: Small ribosomal subunit protein uS15 (89 aa).

Belongs to the universal ribosomal protein uS15 family. Part of the 30S ribosomal subunit. Forms a bridge to the 50S subunit in the 70S ribosome, contacting the 23S rRNA.

One of the primary rRNA binding proteins, it binds directly to 16S rRNA where it helps nucleate assembly of the platform of the 30S subunit by binding and bridging several RNA helices of the 16S rRNA. In terms of biological role, forms an intersubunit bridge (bridge B4) with the 23S rRNA of the 50S subunit in the ribosome. The polypeptide is Small ribosomal subunit protein uS15 (Bdellovibrio bacteriovorus (strain ATCC 15356 / DSM 50701 / NCIMB 9529 / HD100)).